We begin with the raw amino-acid sequence, 425 residues long: UPF0597 protein VSAL_I0741 (425 aa).

It belongs to the UPF0597 family.

The sequence is that of UPF0597 protein VSAL_I0741 from Aliivibrio salmonicida (strain LFI1238) (Vibrio salmonicida (strain LFI1238)).